The primary structure comprises 277 residues: Pantothenate synthetase (277 aa).

Position 26–33 (26–33) interacts with ATP; sequence MGNLHEGH. The Proton donor role is filled by His-33. Gln-57 serves as a coordination point for (R)-pantoate. Beta-alanine is bound at residue Gln-57. Residue 144–147 participates in ATP binding; it reads GKKD. Residue Gln-150 participates in (R)-pantoate binding. ATP contacts are provided by residues Gly-173 and 181–184; that span reads LSSR.

The protein belongs to the pantothenate synthetase family. As to quaternary structure, homodimer.

It localises to the cytoplasm. The enzyme catalyses (R)-pantoate + beta-alanine + ATP = (R)-pantothenate + AMP + diphosphate + H(+). Its pathway is cofactor biosynthesis; (R)-pantothenate biosynthesis; (R)-pantothenate from (R)-pantoate and beta-alanine: step 1/1. Its function is as follows. Catalyzes the condensation of pantoate with beta-alanine in an ATP-dependent reaction via a pantoyl-adenylate intermediate. In Laribacter hongkongensis (strain HLHK9), this protein is Pantothenate synthetase.